Reading from the N-terminus, the 481-residue chain is ATP synthase subunit beta (481 aa).

160-167 (GGAGVGKT) serves as a coordination point for ATP.

It belongs to the ATPase alpha/beta chains family. In terms of assembly, F-type ATPases have 2 components, CF(1) - the catalytic core - and CF(0) - the membrane proton channel. CF(1) has five subunits: alpha(3), beta(3), gamma(1), delta(1), epsilon(1). CF(0) has three main subunits: a(1), b(2) and c(9-12). The alpha and beta chains form an alternating ring which encloses part of the gamma chain. CF(1) is attached to CF(0) by a central stalk formed by the gamma and epsilon chains, while a peripheral stalk is formed by the delta and b chains.

The protein localises to the cell inner membrane. The enzyme catalyses ATP + H2O + 4 H(+)(in) = ADP + phosphate + 5 H(+)(out). Produces ATP from ADP in the presence of a proton gradient across the membrane. The catalytic sites are hosted primarily by the beta subunits. The polypeptide is ATP synthase subunit beta (Myxococcus xanthus (strain DK1622)).